The chain runs to 293 residues: Alcohol dehydrogenase 1 (293 aa).

Residues cysteine 26, cysteine 29, cysteine 32, cysteine 40, and cysteine 104 each contribute to the Zn(2+) site. Residues 129–134 (GLGAVG), aspartate 153, arginine 158, threonine 199, valine 222, 222–224 (VGV), and phenylalanine 249 contribute to the NAD(+) site.

Belongs to the zinc-containing alcohol dehydrogenase family. As to quaternary structure, homodimer. Zn(2+) is required as a cofactor.

The protein localises to the cytoplasm. The catalysed reaction is a primary alcohol + NAD(+) = an aldehyde + NADH + H(+). It carries out the reaction a secondary alcohol + NAD(+) = a ketone + NADH + H(+). This chain is Alcohol dehydrogenase 1 (ADH1), found in Zea luxurians (Guatemalan teosinte).